Reading from the N-terminus, the 529-residue chain is ATP synthase subunit alpha (529 aa).

Residue 173-180 (GDRQTGKT) participates in ATP binding.

It belongs to the ATPase alpha/beta chains family. F-type ATPases have 2 components, CF(1) - the catalytic core - and CF(0) - the membrane proton channel. CF(1) has five subunits: alpha(3), beta(3), gamma(1), delta(1), epsilon(1). CF(0) has three main subunits: a(1), b(2) and c(9-12). The alpha and beta chains form an alternating ring which encloses part of the gamma chain. CF(1) is attached to CF(0) by a central stalk formed by the gamma and epsilon chains, while a peripheral stalk is formed by the delta and b chains.

The protein resides in the cell membrane. The catalysed reaction is ATP + H2O + 4 H(+)(in) = ADP + phosphate + 5 H(+)(out). Its function is as follows. Produces ATP from ADP in the presence of a proton gradient across the membrane. The alpha chain is a regulatory subunit. The sequence is that of ATP synthase subunit alpha from Streptomyces avermitilis (strain ATCC 31267 / DSM 46492 / JCM 5070 / NBRC 14893 / NCIMB 12804 / NRRL 8165 / MA-4680).